A 252-amino-acid polypeptide reads, in one-letter code: Streptothricin hydrolase (252 aa).

The active-site Nucleophile is C158. Low complexity predominate over residues 230 to 242 (AVGPAAAPGLPVS). The disordered stretch occupies residues 230-252 (AVGPAAAPGLPVSPAAPPPSPVR). Residues 243-252 (PAAPPPSPVR) show a composition bias toward pro residues.

It belongs to the isochorismatase family.

It carries out the reaction streptothricin F + H2O = streptothricin F acid. Its function is as follows. Catalyzes the hydrolysis of the amide bond of streptolidine lactam, thereby conferring streptothricin (ST) resistance. Can hydrolyze streptothricin-F and streptothricin-D. However, this strain is believed to be a ST nonproducer, which raises the possibility that its true role may not be its involvement in self-resistance to STs. May catalyze the hydrolysis of naturally occurring cyclic amide compounds that are structurally related to STs. This is Streptothricin hydrolase (sttH) from Streptomyces noursei (Streptomyces albulus).